The following is a 256-amino-acid chain: Phosphatidylglycerol--prolipoprotein diacylglyceryl transferase (256 aa).

3 helical membrane-spanning segments follow: residues 19-39 (VHWY…LGYW), 56-76 (LIFY…MLFY), and 91-111 (IWEG…AAWL). Residue Arg-139 coordinates a 1,2-diacyl-sn-glycero-3-phospho-(1'-sn-glycerol). A helical transmembrane segment spans residues 231–251 (FGWLTMGQVLSIPMLLIGIWL).

This sequence belongs to the Lgt family.

The protein localises to the cell inner membrane. It carries out the reaction L-cysteinyl-[prolipoprotein] + a 1,2-diacyl-sn-glycero-3-phospho-(1'-sn-glycerol) = an S-1,2-diacyl-sn-glyceryl-L-cysteinyl-[prolipoprotein] + sn-glycerol 1-phosphate + H(+). The protein operates within protein modification; lipoprotein biosynthesis (diacylglyceryl transfer). Functionally, catalyzes the transfer of the diacylglyceryl group from phosphatidylglycerol to the sulfhydryl group of the N-terminal cysteine of a prolipoprotein, the first step in the formation of mature lipoproteins. The protein is Phosphatidylglycerol--prolipoprotein diacylglyceryl transferase of Legionella pneumophila (strain Corby).